We begin with the raw amino-acid sequence, 370 residues long: MKFELDKQDGRARRGRLIFKRGVVETPAFMPVGTYGSVKGMMPEEVADTGAQIILGNTFHLSIRPGTDIIEQHGDLHDFMNWKGPILTDSGGFQVFSLGKMRKITEEGVHFRNPVNGSKIFMGPEESMDVQRKLGSDIVMIFDECTPYPATHDVAADSMRLSLRWAERSKQAHGDNPSALFGIVQGGMYEDLRQESIKGLTDIGFDGYAIGGLSVGEPKEEMMGTLDFTEPHMPKDKPRYMMGVGKPEDIVEAVRRGIDMFDCVIPTRNARNGFLFTHSGVVKIRNAVNKTSLEPLDAKCDCYTCQNYTRAYLHHLDKCGEIQGARLNTIHNLHYYQLLMKGLREAIASETLDTFVSEFYQARGEDVPAL.

Residue D89 is the Proton acceptor of the active site. Residues 89-93, D143, Q185, and G212 each bind substrate; that span reads DSGGF. An RNA binding region spans residues 243-249; it reads GVGKPED. Catalysis depends on D262, which acts as the Nucleophile. The RNA binding; important for wobble base 34 recognition stretch occupies residues 267 to 271; sequence TRNAR. Zn(2+)-binding residues include C300, C302, C305, and H331.

The protein belongs to the queuine tRNA-ribosyltransferase family. In terms of assembly, homodimer. Within each dimer, one monomer is responsible for RNA recognition and catalysis, while the other monomer binds to the replacement base PreQ1. It depends on Zn(2+) as a cofactor.

It catalyses the reaction 7-aminomethyl-7-carbaguanine + guanosine(34) in tRNA = 7-aminomethyl-7-carbaguanosine(34) in tRNA + guanine. The protein operates within tRNA modification; tRNA-queuosine biosynthesis. In terms of biological role, catalyzes the base-exchange of a guanine (G) residue with the queuine precursor 7-aminomethyl-7-deazaguanine (PreQ1) at position 34 (anticodon wobble position) in tRNAs with GU(N) anticodons (tRNA-Asp, -Asn, -His and -Tyr). Catalysis occurs through a double-displacement mechanism. The nucleophile active site attacks the C1' of nucleotide 34 to detach the guanine base from the RNA, forming a covalent enzyme-RNA intermediate. The proton acceptor active site deprotonates the incoming PreQ1, allowing a nucleophilic attack on the C1' of the ribose to form the product. After dissociation, two additional enzymatic reactions on the tRNA convert PreQ1 to queuine (Q), resulting in the hypermodified nucleoside queuosine (7-(((4,5-cis-dihydroxy-2-cyclopenten-1-yl)amino)methyl)-7-deazaguanosine). The sequence is that of Queuine tRNA-ribosyltransferase from Hydrogenovibrio crunogenus (strain DSM 25203 / XCL-2) (Thiomicrospira crunogena).